Here is an 899-residue protein sequence, read N- to C-terminus: Conserved oligomeric Golgi complex subunit 3 (899 aa).

Belongs to the COG3 family. In terms of assembly, component of the conserved oligomeric Golgi complex which is composed of eight different subunits and is required for normal Golgi morphology and localization.

Its subcellular location is the golgi apparatus membrane. In terms of biological role, involved in ER-Golgi transport. This Aedes aegypti (Yellowfever mosquito) protein is Conserved oligomeric Golgi complex subunit 3.